Consider the following 818-residue polypeptide: Dapper 1-A (818 aa).

Residues 1–10 are compositionally biased toward pro residues; that stretch reads MKPIPSPEPP. Disordered regions lie at residues 1-30, 60-80, 122-144, 455-486, and 510-530; these read MKPIPSPEPPGQLRLTPRRKDKGEAEWERH, VLSPGTHGQDAAPTGDSPRSD, IDSEKTEETDSRPSSGFYELSDG, NVTPNAPANLPNASSSVCNGSPRESTQNSALL, and ESSSFEERPPLDFKSEGSSSQ. The interaction with tcf7l1-A stretch occupies residues 1 to 337; sequence MKPIPSPEPP…PVRTNKPRTS (337 aa). A compositionally biased stretch (basic and acidic residues) spans 21-30; sequence DKGEAEWERH. Positions 79-130 form a coiled coil; sequence SDEQKLLEENISLLKKQLNCLRKRDAGLLSQLHELDKQINDLKIDSEKTEET. Positions 122 to 132 are enriched in basic and acidic residues; sequence IDSEKTEETDS. Residues 455 to 485 show a composition bias toward polar residues; the sequence is NVTPNAPANLPNASSSVCNGSPRESTQNSAL. A compositionally biased stretch (basic and acidic residues) spans 512–524; it reads SSFEERPPLDFKS. The PDZ-binding signature appears at 815-818; the sequence is MTTV.

The protein belongs to the dapper family. As to quaternary structure, interacts with dbf4 and tcf7l1-A. Interacts with dvl2/dsh via the C-terminus. As to expression, expressed in the animal and dorsal marginal regions at late blastula and early gastrula stages. Expressed predominantly in the anterior neural plate at neurulation. Expressed mainly in the ectodermal placodes, including the eye anlagen and the otic vesicle, at later stages of development.

The protein localises to the cytoplasm. Its subcellular location is the nucleus. Its function is as follows. Involved in regulation of intracellular signaling pathways during development. Specifically thought to play a role in canonical and/or non-canonical Wnt signaling pathways through interaction with DSH (Dishevelled) family proteins. Binds to dvl2/dsh and impedes the degradation of beta-catenin (ctnnb1-A and possibly ctnnb1-B), thereby enhancing the transcriptional activation of target genes of the Wnt signaling pathway. Also promotes catenin delta/ctnnd1 stability which in turn promotes zbtb33/kaiso sequestration and thus is involved in the regulation of zbtb33/kaiso-mediated transcriptional repression. May also bind to and directly stimulate the transcriptional activity of tcf7l1-A. Required for eye development and neural patterning. This Xenopus laevis (African clawed frog) protein is Dapper 1-A (dact1-a).